A 582-amino-acid chain; its full sequence is Potassium voltage-gated channel subfamily KQT member 1 (582 aa).

At Arg-1 to Trp-31 the chain is on the cytoplasmic side. Residues Lys-32–Leu-53 form a helical membrane-spanning segment. The Extracellular portion of the chain corresponds to Ser-54–Thr-64. The chain crosses the membrane as a helical span at residues Gly-65–Trp-87. Topologically, residues Ser-88–Arg-103 are cytoplasmic. The helical transmembrane segment at Phe-104–Lys-129 threads the bilayer. Residues Gly-130–Ala-137 are Extracellular-facing. The chain crosses the membrane as a helical; Voltage-sensor span at residues Ile-138–Asp-153. Residues Met-149–Gly-157 form an interaction with KCNE3 region. The Cytoplasmic segment spans residues Arg-154–Gln-171. Gln-155 serves as a coordination point for a 1,2-diacyl-sn-glycero-3-phospho-(1D-myo-inositol-4,5-bisphosphate). A helical membrane pass occupies residues Glu-172–Ala-194. At Glu-195–Tyr-210 the chain is on the extracellular side. An N-linked (GlcNAc...) asparagine glycan is attached at Asn-200. Residues Ala-211–Pro-231 constitute an intramembrane region (pore-forming). Over Gln-232–Thr-233 the chain is Extracellular. The chain crosses the membrane as a helical span at residues Trp-234–Gly-259. At Ser-260 to Ser-582 the chain is on the cytoplasmic side. An interaction with CALM region spans residues Ala-281 to Tyr-293. 2 positions are modified to phosphoserine: Ser-318 and Ser-320. Positions Lys-426 to Phe-440 are interaction with CALM; calcium-dependent. The interaction with KCNE1 C-terminus stretch occupies residues Pro-446–Leu-483. A coiled-coil region spans residues Ser-496–His-532. The interval Ile-499–Leu-527 is interaction with AKAP9. A C-terminal assembly domain (tetramerization) region spans residues Gly-500–His-531. The interval Leu-530 to Ser-582 is disordered.

It belongs to the potassium channel family. KQT (TC 1.A.1.15) subfamily. Kv7.1/KCNQ1 sub-subfamily. In terms of assembly, tetramer. Heterotetramer with KCNE1; targets to the membrane raft. Interacts (via C-terminus) with CALM; forms a heterooctameric structure (with 4:4 KCNQ1:CALM stoichiometry) in a calcium-independent manner. Interacts with AKAP9; targets protein kinase A (PKA) catalytic and regulatory subunits and protein phosphatase 1 (PP1) to the KCNQ1-KCNE1 complex, allowing PKA-mediated phosphorylation and increase of delayed rectifier potassium channel activity. Interacts with KCNE2; form a heterooligomer complex that targets to the membrane raft and leading to currents with an apparently instantaneous activation, a rapid deactivation process and a linear current-voltage relationship and decreases the amplitude of the outward current. Interacts with AP2M1; mediates estrogen-induced internalization via clathrin-coated vesicles. Interacts with NEDD4L; promotes internalization and decreases I(Ks) currents. Interacts with USP2; counteracts the NEDD4L-specific down-regulation of I(Ks) and restore plasma membrane localization. Heterotetramer with KCNQ5; has a voltage-gated potassium channel activity. Interacts with KCNE3; four KCNE3 molecules are bound to one KCNQ1 tetramer (4:4 KCNQ1:KCNE3 stoichiometry); alters membrane raft localization; affects KCNQ1 structure and gating properties. Interacts with KCNE4; impairs KCNQ1 localization in lipid rafts and inhibits voltage-gated potassium channel activity. Interacts with KCNE5; impairs KCNQ1 localization in lipid rafts and only conducts current upon strong and continued depolarization. In terms of processing, phosphorylated by PKA; increases delayed rectifier potassium channel activity of the KCNQ1-KCNE1 complex through a macromolecular complex that includes PKA, PP1, and the targeting protein AKAP9. Ubiquitinated by NEDD4L; promotes internalization. The ubiquitinylated form is internalized through a clathrin-mediated endocytosis by interacting with AP2M1 and is recycled back to the cell membrane via RAB4A and RAB11A. Post-translationally, deubiquitinated by USP2; counteracts the NEDD4L-specific down-regulation of I(Ks) and restores the membrane localization.

The protein resides in the cell membrane. The protein localises to the cytoplasmic vesicle membrane. It localises to the early endosome. Its subcellular location is the membrane raft. It is found in the endoplasmic reticulum. The protein resides in the basolateral cell membrane. The catalysed reaction is K(+)(in) = K(+)(out). Its activity is regulated as follows. PIP2 molecule is essential to activate KCNQ channels by inducing the coupling of the voltage-sensing domain (VSD) and the pore-forming domain (PD). Upon channel activation, PIP2 disrupts the VSD-calmodulin/CALM interactions, causing the release of CALM from the VSD which triggers the opening of the gate. Calcium potentiates KCNQ1 channel current through calcium-bound CALM. Calcium-bound CALM competes with PIP2 to stabilize the channel open state. Its function is as follows. Pore-forming subunit of the voltage-gated potassium (Kv) channel involved in the regulation of cardiomyocyte excitability and important in normal development and functions of myocardium, inner ear, stomach and colon. Associates with KCNE beta subunits that modulates current kinetics. Induces a voltage-dependent by rapidly activating and slowly deactivating potassium-selective outward current. Also promotes a delayed voltage activated potassium current showing outward rectification characteristic. During beta-adrenergic receptor stimulation participates in cardiac repolarization by associating with KCNE1 to form the I(Ks) cardiac potassium current that increases the amplitude and slows down the activation kinetics of outward potassium current I(Ks). Muscarinic agonist oxotremorine-M strongly suppresses KCNQ1/KCNE1 current. When associated with KCNE3, forms the potassium channel that is important for cyclic AMP-stimulated intestinal secretion of chloride ions. This interaction with KCNE3 is reduced by 17beta-estradiol, resulting in the reduction of currents. During conditions of increased substrate load, maintains the driving force for proximal tubular and intestinal sodium ions absorption, gastric acid secretion, and cAMP-induced jejunal chloride ions secretion. Allows the provision of potassium ions to the luminal membrane of the secretory canaliculus in the resting state as well as during stimulated acid secretion. When associated with KCNE2, forms a heterooligomer complex leading to currents with an apparently instantaneous activation, a rapid deactivation process and a linear current-voltage relationship and decreases the amplitude of the outward current. When associated with KCNE4, inhibits voltage-gated potassium channel activity. When associated with KCNE5, this complex only conducts current upon strong and continued depolarization. Also forms a heterotetramer with KCNQ5 that has a voltage-gated potassium channel activity. Binds with phosphatidylinositol 4,5-bisphosphate. This chain is Potassium voltage-gated channel subfamily KQT member 1, found in Felis catus (Cat).